Reading from the N-terminus, the 301-residue chain is MAYRDRTGLYITFRQSYSHHGQRLELSGWDPKEERQSLVHKDNKDNTVIEMDMLAPRWVTVEGEIDSLLLNTRRNINLLDKQYAKHVLPSFSDKTEQENEIQRLTIQITQDFQRCQKLLQVTKAQTNSATGSEALMAKNFLSNLASRIQTESAQFRKKQSTYLKKLRGLNANISPVESKLDETVSDVAISQSTIQQVALMEEQGEDEQAIRHERAVAKIAEGIIELAQMFQDLQVLVIEQGALVDRIDFNIEQTQVHAKSAEKELIKAESHQKNTGRLRFICFLILLIVALIVILAIKLLR.

Residues 1 to 279 (MAYRDRTGLY…SHQKNTGRLR (279 aa)) lie on the Cytoplasmic side of the membrane. Residues 92–120 (SDKTEQENEIQRLTIQITQDFQRCQKLLQ) adopt a coiled-coil conformation. One can recognise a t-SNARE coiled-coil homology domain in the interval 206–268 (DEQAIRHERA…KSAEKELIKA (63 aa)). A helical; Anchor for type IV membrane protein transmembrane segment spans residues 280–300 (FICFLILLIVALIVILAIKLL). A topological domain (vesicular) is located at residue Arg-301.

It belongs to the syntaxin family.

The protein localises to the golgi apparatus. It localises to the trans-Golgi network membrane. Its subcellular location is the endosome membrane. T-SNARE that functions in transport from the endosome to the late Golgi and on the endocytic pathway. The sequence is that of t-SNARE affecting a late Golgi compartment protein 2 (tlg2) from Schizosaccharomyces pombe (strain 972 / ATCC 24843) (Fission yeast).